The sequence spans 320 residues: ATPase H(+)-transporting accessory protein 2 (320 aa).

Positions 1 to 17 (MLRVFVIFSLFIAAINA) are cleaved as a signal peptide. Residues 18–277 (SGEFTVLNRP…YGSDYPVIFN (260 aa)) lie on the Lumenal side of the membrane. A helical membrane pass occupies residues 278-298 (IILWFMVVFGLSLLAICYAIA). Over 299-320 (AMDPGRDSIIYRMTSTRIKKDN) the chain is Cytoplasmic. The Mediates retrograde transport to the ER motif lies at 317-320 (KKDN).

In terms of assembly, interacts with fz and fz2. Interacts (via N-terminus) with stan. As an accessory component of the multisubunit proton-transporting vacuolar (V)-ATPase protein pump, might interacts with VhaAC45. In terms of processing, proteolytically cleaved by a furin-like convertase in the trans-Golgi network to generate N- and C-terminal fragments. Cleavage is reduced in the fat body.

The protein resides in the cell membrane. Its subcellular location is the endoplasmic reticulum membrane. It localises to the vesicle. The protein localises to the apical cell membrane. It is found in the golgi apparatus membrane. The protein resides in the secreted. Functionally, multifunctional protein which functions as a transmembrane receptor in the planar cell polarity (PCP) and is involved in the assembly of the proton-transporting vacuolar (V)-ATPase protein pump. As transmembrane receptor mediates fz/PCP signaling through interaction with fz and stabilizes asymmetric PCP domains through its interaction with stan. Also mediates Wnt/beta-cat signaling through interaction with fz/fz2. Probably by controlling the assembly of the V-ATPase pump and thus the acidification of the endo-lysosomal system, plays a role in many neuronal processes including synapse morphology and synaptic transmission. In terms of biological role, stabilizes asymmetric Planar Cell Polarity (PCP) domains through its interaction with stan. The chain is ATPase H(+)-transporting accessory protein 2 from Drosophila melanogaster (Fruit fly).